The sequence spans 618 residues: Very-long-chain aldehyde decarbonylase GL1-3 (618 aa).

Helical transmembrane passes span 9 to 29 (LSSW…GPVV), 46 to 66 (TSWC…MLFF), 91 to 111 (MVIM…FPAT), 121 to 141 (GWAI…YWAH), 174 to 194 (LESL…FMAG), 289 to 309 (DFVF…PFAF), and 315 to 335 (LPFA…GFML). One can recognise a Fatty acid hydroxylase domain in the interval 127-267 (VLHVAVSEPA…MPLFDALGGT (141 aa)).

It belongs to the sterol desaturase family. As to quaternary structure, homodimer. As to expression, expressed in germinating seeds and stamens.

It localises to the endoplasmic reticulum membrane. The catalysed reaction is a long-chain fatty aldehyde + 2 NADPH + O2 + H(+) = a long-chain alkane + formate + 2 NADP(+) + H2O. Aldehyde decarbonylase involved in the conversion of aldehydes to alkanes. Core component of a very-long-chain alkane synthesis complex. The protein is Very-long-chain aldehyde decarbonylase GL1-3 of Oryza sativa subsp. japonica (Rice).